Here is a 527-residue protein sequence, read N- to C-terminus: Peptide chain release factor 3 (527 aa).

The tr-type G domain occupies 9–277; it reads AKRRTFAIIS…AVVNWAPKPL (269 aa). GTP is bound by residues 18–25, 86–90, and 140–143; these read SHPDAGKT, DTPGH, and NKLD.

Belongs to the TRAFAC class translation factor GTPase superfamily. Classic translation factor GTPase family. PrfC subfamily.

The protein localises to the cytoplasm. Increases the formation of ribosomal termination complexes and stimulates activities of RF-1 and RF-2. It binds guanine nucleotides and has strong preference for UGA stop codons. It may interact directly with the ribosome. The stimulation of RF-1 and RF-2 is significantly reduced by GTP and GDP, but not by GMP. The protein is Peptide chain release factor 3 of Pseudomonas syringae pv. syringae (strain B728a).